Here is an 809-residue protein sequence, read N- to C-terminus: ATP-dependent zinc metalloprotease FTSH 3, mitochondrial (809 aa).

The N-terminal 83 residues, 1 to 83 (MTMIFFSKLN…FANPRLRRFF (83 aa)), are a transit peptide targeting the mitochondrion. Over residues 93 to 121 (YENYFPKDKQEPKSDQKSEHKEGSEKNEN) the composition is skewed to basic and acidic residues. A disordered region spans residues 93–122 (YENYFPKDKQEPKSDQKSEHKEGSEKNENE). Residues 132–152 (FQNLLIPLLALAVFFSTFSFG) form a helical membrane-spanning segment. Residue 362–369 (GPPGTGKT) coordinates ATP. His586 is a binding site for Zn(2+). Residue Glu587 is part of the active site. Zn(2+) is bound by residues His590 and Asp662. The segment at 776-809 (GFEETEKDSAATPTVEPVVDDGAPPPFEPQVVPT) is disordered.

In the N-terminal section; belongs to the AAA ATPase family. This sequence in the C-terminal section; belongs to the peptidase M41 family. Zn(2+) is required as a cofactor.

It localises to the mitochondrion inner membrane. Probable ATP-dependent zinc metallopeptidase. Involved in the assembly and/or stability of the complexes I and V of the mitochondrial oxidative phosphorylation system. The protein is ATP-dependent zinc metalloprotease FTSH 3, mitochondrial (FTSH3) of Arabidopsis thaliana (Mouse-ear cress).